Here is a 225-residue protein sequence, read N- to C-terminus: NAD(P)H-quinone oxidoreductase subunit K, chloroplastic (225 aa).

[4Fe-4S] cluster is bound by residues C43, C44, C108, and C139.

Belongs to the complex I 20 kDa subunit family. As to quaternary structure, NDH is composed of at least 16 different subunits, 5 of which are encoded in the nucleus. The cofactor is [4Fe-4S] cluster.

It is found in the plastid. The protein resides in the chloroplast thylakoid membrane. The enzyme catalyses a plastoquinone + NADH + (n+1) H(+)(in) = a plastoquinol + NAD(+) + n H(+)(out). The catalysed reaction is a plastoquinone + NADPH + (n+1) H(+)(in) = a plastoquinol + NADP(+) + n H(+)(out). NDH shuttles electrons from NAD(P)H:plastoquinone, via FMN and iron-sulfur (Fe-S) centers, to quinones in the photosynthetic chain and possibly in a chloroplast respiratory chain. The immediate electron acceptor for the enzyme in this species is believed to be plastoquinone. Couples the redox reaction to proton translocation, and thus conserves the redox energy in a proton gradient. The polypeptide is NAD(P)H-quinone oxidoreductase subunit K, chloroplastic (Lolium perenne (Perennial ryegrass)).